The primary structure comprises 342 residues: Holliday junction branch migration complex subunit RuvB (342 aa).

The large ATPase domain (RuvB-L) stretch occupies residues 1 to 179 (MTNILSPEKI…FGIPMRLNFY (179 aa)). ATP-binding positions include isoleucine 18, arginine 19, glycine 60, lysine 63, threonine 64, threonine 65, 126 to 128 (EDF), arginine 169, tyrosine 179, and arginine 216. Threonine 64 is a binding site for Mg(2+). Positions 180 to 250 (NTEELKKVLN…ISDFGLNRLE (71 aa)) are small ATPAse domain (RuvB-S). Positions 253 to 342 (HIGLDSNDYR…HQFNIFNENE (90 aa)) are head domain (RuvB-H). The DNA site is built by arginine 289, arginine 308, and arginine 313.

Belongs to the RuvB family. As to quaternary structure, homohexamer. Forms an RuvA(8)-RuvB(12)-Holliday junction (HJ) complex. HJ DNA is sandwiched between 2 RuvA tetramers; dsDNA enters through RuvA and exits via RuvB. An RuvB hexamer assembles on each DNA strand where it exits the tetramer. Each RuvB hexamer is contacted by two RuvA subunits (via domain III) on 2 adjacent RuvB subunits; this complex drives branch migration. In the full resolvosome a probable DNA-RuvA(4)-RuvB(12)-RuvC(2) complex forms which resolves the HJ.

Its subcellular location is the cytoplasm. The enzyme catalyses ATP + H2O = ADP + phosphate + H(+). In terms of biological role, the RuvA-RuvB-RuvC complex processes Holliday junction (HJ) DNA during genetic recombination and DNA repair, while the RuvA-RuvB complex plays an important role in the rescue of blocked DNA replication forks via replication fork reversal (RFR). RuvA specifically binds to HJ cruciform DNA, conferring on it an open structure. The RuvB hexamer acts as an ATP-dependent pump, pulling dsDNA into and through the RuvAB complex. RuvB forms 2 homohexamers on either side of HJ DNA bound by 1 or 2 RuvA tetramers; 4 subunits per hexamer contact DNA at a time. Coordinated motions by a converter formed by DNA-disengaged RuvB subunits stimulates ATP hydrolysis and nucleotide exchange. Immobilization of the converter enables RuvB to convert the ATP-contained energy into a lever motion, pulling 2 nucleotides of DNA out of the RuvA tetramer per ATP hydrolyzed, thus driving DNA branch migration. The RuvB motors rotate together with the DNA substrate, which together with the progressing nucleotide cycle form the mechanistic basis for DNA recombination by continuous HJ branch migration. Branch migration allows RuvC to scan DNA until it finds its consensus sequence, where it cleaves and resolves cruciform DNA. The protein is Holliday junction branch migration complex subunit RuvB of Rickettsia felis (strain ATCC VR-1525 / URRWXCal2) (Rickettsia azadi).